A 365-amino-acid chain; its full sequence is Probable dual-specificity RNA methyltransferase RlmN (365 aa).

The active-site Proton acceptor is the E106. One can recognise a Radical SAM core domain in the interval Y112 to E352. A disulfide bridge links C119 with C357. C126, C130, and C133 together coordinate [4Fe-4S] cluster. Residues G181 to E182, S215, S238 to H240, and N314 each bind S-adenosyl-L-methionine. C357 serves as the catalytic S-methylcysteine intermediate.

The protein belongs to the radical SAM superfamily. RlmN family. It depends on [4Fe-4S] cluster as a cofactor.

Its subcellular location is the cytoplasm. The catalysed reaction is adenosine(2503) in 23S rRNA + 2 reduced [2Fe-2S]-[ferredoxin] + 2 S-adenosyl-L-methionine = 2-methyladenosine(2503) in 23S rRNA + 5'-deoxyadenosine + L-methionine + 2 oxidized [2Fe-2S]-[ferredoxin] + S-adenosyl-L-homocysteine. The enzyme catalyses adenosine(37) in tRNA + 2 reduced [2Fe-2S]-[ferredoxin] + 2 S-adenosyl-L-methionine = 2-methyladenosine(37) in tRNA + 5'-deoxyadenosine + L-methionine + 2 oxidized [2Fe-2S]-[ferredoxin] + S-adenosyl-L-homocysteine. In terms of biological role, specifically methylates position 2 of adenine 2503 in 23S rRNA and position 2 of adenine 37 in tRNAs. This is Probable dual-specificity RNA methyltransferase RlmN from Thermobifida fusca (strain YX).